We begin with the raw amino-acid sequence, 335 residues long: 34 kDa spicule matrix protein (335 aa).

An N-terminal signal peptide occupies residues 1–17 (MKGLLLILASLVAIATG). Residues 29–194 (SGASCYRYFN…ATAMRAFVCE (166 aa)) form the C-type lectin domain. The cysteines at positions 50 and 193 are disulfide-linked. Residues 199–335 (QNIPPGQQPG…QEAETDVTGS (137 aa)) are disordered. The segment covering 207–310 (PGFGGQQPGF…GGPQRPGMGG (104 aa)) has biased composition (gly residues). Positions 311-323 (QPNSPNPRFNRPR) are enriched in low complexity.

Belongs to the SM50 family. In terms of tissue distribution, embryo spicule.

Its subcellular location is the secreted. Its function is as follows. Major matrix protein of the sea urchin embryo spicule which directs crystal growth in certain orientations and inhibit growth in others. This chain is 34 kDa spicule matrix protein, found in Lytechinus pictus (Painted sea urchin).